Here is a 440-residue protein sequence, read N- to C-terminus: Enolase (440 aa).

Gln163 lines the (2R)-2-phosphoglycerate pocket. Residue Glu205 is the Proton donor of the active site. Mg(2+) contacts are provided by Asp242, Glu288, and Asp315. (2R)-2-phosphoglycerate is bound by residues Lys340, Arg369, Ser370, and Lys391. Residue Lys340 is the Proton acceptor of the active site.

The protein belongs to the enolase family. Requires Mg(2+) as cofactor.

It is found in the cytoplasm. The protein resides in the secreted. The protein localises to the cell surface. The catalysed reaction is (2R)-2-phosphoglycerate = phosphoenolpyruvate + H2O. It participates in carbohydrate degradation; glycolysis; pyruvate from D-glyceraldehyde 3-phosphate: step 4/5. Catalyzes the reversible conversion of 2-phosphoglycerate (2-PG) into phosphoenolpyruvate (PEP). It is essential for the degradation of carbohydrates via glycolysis. The chain is Enolase from Pediococcus pentosaceus (strain ATCC 25745 / CCUG 21536 / LMG 10740 / 183-1w).